The following is a 169-amino-acid chain: Chorion protein E1 (169 aa).

The N-terminal stretch at M1–A19 is a signal peptide. Tetradecapeptide repeat units follow at residues G114–S127 and G128–S141. The interval A119–S169 is disordered. Polar residues predominate over residues T142–A152.

Its function is as follows. This protein is one of two components of the prominent 'filler' that helps mold the shape of aeropyle crowns. The protein is Chorion protein E1 of Antheraea polyphemus (Polyphemus moth).